The sequence spans 851 residues: DNA mismatch repair protein MutS (851 aa).

Position 602 to 609 (602 to 609 (GPNMSGKS)) interacts with ATP.

The protein belongs to the DNA mismatch repair MutS family.

This protein is involved in the repair of mismatches in DNA. It is possible that it carries out the mismatch recognition step. This protein has a weak ATPase activity. This chain is DNA mismatch repair protein MutS, found in Streptococcus equi subsp. equi (strain 4047).